The chain runs to 280 residues: Delta(3,5)-Delta(2,4)-dienoyl-CoA isomerase (280 aa).

Glu154 functions as the Proton donor/acceptor in the catalytic mechanism. Positions 278-280 match the Peroxisome targeting signal (PTS1) motif; sequence HKL.

Belongs to the enoyl-CoA hydratase/isomerase family.

It is found in the cytoplasm. It localises to the cytosol. The protein resides in the peroxisome. The catalysed reaction is a (3E,5Z)-dienoyl-CoA = a (2E,4E)-(5,6-saturated)-dienoyl-CoA. It participates in lipid metabolism; fatty acid beta-oxidation. Functionally, peroxisomal di-isomerase that is involved in fatty acid metabolism enzyme by converting 3,5-dienoyl-CoAs to the corresponding 2,4-dienoyl-CoAs. Involved in fatty acid beta-oxidation, which is important for lipid droplets degradation and infectious growth. This is Delta(3,5)-Delta(2,4)-dienoyl-CoA isomerase from Pyricularia oryzae (strain 70-15 / ATCC MYA-4617 / FGSC 8958) (Rice blast fungus).